The chain runs to 208 residues: Uracil phosphoribosyltransferase (208 aa).

Residues arginine 78, arginine 103, and 130 to 138 (DPMLATGGS) each bind 5-phospho-alpha-D-ribose 1-diphosphate. Residues isoleucine 193 and 198–200 (GDA) contribute to the uracil site. Residue aspartate 199 coordinates 5-phospho-alpha-D-ribose 1-diphosphate.

It belongs to the UPRTase family. The cofactor is Mg(2+).

It carries out the reaction UMP + diphosphate = 5-phospho-alpha-D-ribose 1-diphosphate + uracil. It functions in the pathway pyrimidine metabolism; UMP biosynthesis via salvage pathway; UMP from uracil: step 1/1. Its activity is regulated as follows. Allosterically activated by GTP. Functionally, catalyzes the conversion of uracil and 5-phospho-alpha-D-ribose 1-diphosphate (PRPP) to UMP and diphosphate. The polypeptide is Uracil phosphoribosyltransferase (Sodalis glossinidius (strain morsitans)).